The primary structure comprises 189 residues: Thermostable direct hemolysin (189 aa).

The signal sequence occupies residues 1-24 (MKYQYFAKKSFLFISMLAAFKTFA). A disulfide bridge links Cys-175 with Cys-185.

It belongs to the TDH hemolysin family. In terms of assembly, homodimer.

In terms of biological role, bacterial hemolysins are exotoxins that attack blood cell membranes and cause cell rupture by mechanisms not clearly defined. The polypeptide is Thermostable direct hemolysin (tdh) (Vibrio mimicus).